Here is a 654-residue protein sequence, read N- to C-terminus: Acetyl-coenzyme A synthetase (654 aa).

CoA is bound by residues 196–199 (RGGK) and Thr316. Residues 392 to 394 (GEP), 416 to 421 (DTWWQT), Asp507, and Arg522 each bind ATP. Residue Ser530 coordinates CoA. Arg533 is a binding site for ATP. Mg(2+) contacts are provided by Val544 and Val549. Residue Lys619 is modified to N6-acetyllysine.

It belongs to the ATP-dependent AMP-binding enzyme family. The cofactor is Mg(2+). In terms of processing, acetylated. Deacetylation by the SIR2-homolog deacetylase activates the enzyme.

It catalyses the reaction acetate + ATP + CoA = acetyl-CoA + AMP + diphosphate. Functionally, catalyzes the conversion of acetate into acetyl-CoA (AcCoA), an essential intermediate at the junction of anabolic and catabolic pathways. AcsA undergoes a two-step reaction. In the first half reaction, AcsA combines acetate with ATP to form acetyl-adenylate (AcAMP) intermediate. In the second half reaction, it can then transfer the acetyl group from AcAMP to the sulfhydryl group of CoA, forming the product AcCoA. In Chromobacterium violaceum (strain ATCC 12472 / DSM 30191 / JCM 1249 / CCUG 213 / NBRC 12614 / NCIMB 9131 / NCTC 9757 / MK), this protein is Acetyl-coenzyme A synthetase.